Reading from the N-terminus, the 156-residue chain is Small ribosomal subunit protein uS7 (156 aa).

Belongs to the universal ribosomal protein uS7 family. In terms of assembly, part of the 30S ribosomal subunit. Contacts proteins S9 and S11.

One of the primary rRNA binding proteins, it binds directly to 16S rRNA where it nucleates assembly of the head domain of the 30S subunit. Is located at the subunit interface close to the decoding center, probably blocks exit of the E-site tRNA. This Syntrophobacter fumaroxidans (strain DSM 10017 / MPOB) protein is Small ribosomal subunit protein uS7.